Reading from the N-terminus, the 643-residue chain is Threonine--tRNA ligase (643 aa).

The 61-residue stretch at 1–61 (MPIITLPDGS…SEDSSLEIIT (61 aa)) folds into the TGS domain. Positions 243-534 (DHRRIGKALD…ITEEYAGFFP (292 aa)) are catalytic. 3 residues coordinate Zn(2+): Cys-334, His-385, and His-511.

Belongs to the class-II aminoacyl-tRNA synthetase family. In terms of assembly, homodimer. It depends on Zn(2+) as a cofactor.

Its subcellular location is the cytoplasm. It catalyses the reaction tRNA(Thr) + L-threonine + ATP = L-threonyl-tRNA(Thr) + AMP + diphosphate + H(+). In terms of biological role, catalyzes the attachment of threonine to tRNA(Thr) in a two-step reaction: L-threonine is first activated by ATP to form Thr-AMP and then transferred to the acceptor end of tRNA(Thr). Also edits incorrectly charged L-seryl-tRNA(Thr). The chain is Threonine--tRNA ligase from Actinobacillus pleuropneumoniae serotype 5b (strain L20).